The sequence spans 475 residues: Vasculin-like protein 1 (475 aa).

2 positions are modified to phosphoserine: Ser49 and Ser76. 2 disordered regions span residues 92-115 and 160-191; these read NLSG…GSTG and PSLN…SAKQ. A Phosphoserine modification is found at Ser202. Disordered stretches follow at residues 237–271 and 292–318; these read LVPK…EAAL and PKES…RRTT. A compositionally biased stretch (low complexity) spans 294–311; that stretch reads ESPSSTTPPIEISSSRLT. Phosphothreonine is present on Thr300. Ser383 is subject to Phosphoserine. The tract at residues 456 to 475 is disordered; that stretch reads CEDSDTETSSSETSDDDAWK.

It belongs to the vasculin family.

Its subcellular location is the nucleus. Its function is as follows. Possible transcription factor. This chain is Vasculin-like protein 1 (Gpbp1l1), found in Rattus norvegicus (Rat).